The following is a 142-amino-acid chain: Large ribosomal subunit protein uL11 (142 aa).

The protein belongs to the universal ribosomal protein uL11 family. In terms of assembly, part of the ribosomal stalk of the 50S ribosomal subunit. Interacts with L10 and the large rRNA to form the base of the stalk. L10 forms an elongated spine to which L12 dimers bind in a sequential fashion forming a multimeric L10(L12)X complex. One or more lysine residues are methylated.

Forms part of the ribosomal stalk which helps the ribosome interact with GTP-bound translation factors. This chain is Large ribosomal subunit protein uL11, found in Bartonella tribocorum (strain CIP 105476 / IBS 506).